Here is a 122-residue protein sequence, read N- to C-terminus: High-potential iron-sulfur protein (122 aa).

An N-terminal signal peptide occupies residues methionine 1–alanine 37. [4Fe-4S] cluster contacts are provided by cysteine 80, cysteine 83, cysteine 100, and cysteine 114.

The protein belongs to the high-potential iron-sulfur protein (HiPIP) family. As to quaternary structure, homodimer.

The protein localises to the periplasm. Specific class of high-redox-potential 4Fe-4S ferredoxins. Functions in anaerobic electron transport in most purple and in some other photosynthetic bacteria and in at least one genus (Paracoccus) of halophilic, denitrifying bacteria. The polypeptide is High-potential iron-sulfur protein (hip) (Allochromatium vinosum (strain ATCC 17899 / DSM 180 / NBRC 103801 / NCIMB 10441 / D) (Chromatium vinosum)).